The following is a 121-amino-acid chain: MGIEEYGGGQGPHSDVLVVTTNDVPGYRVQHVIGEVFGLTVRSRHLGSQIGAGLKSMIGGELKGLTKTLVETRNQAMERLVEQARVRGGNGILMMRFDVTEAADVGTEVCAYGTAVVLVKA.

This sequence belongs to the UPF0145 family.

In Streptomyces avermitilis (strain ATCC 31267 / DSM 46492 / JCM 5070 / NBRC 14893 / NCIMB 12804 / NRRL 8165 / MA-4680), this protein is UPF0145 protein SAV_4658.